A 450-amino-acid chain; its full sequence is Phosphoglucosamine mutase (450 aa).

S102 functions as the Phosphoserine intermediate in the catalytic mechanism. S102, D243, D245, and D247 together coordinate Mg(2+). Phosphoserine is present on S102.

This sequence belongs to the phosphohexose mutase family. Requires Mg(2+) as cofactor. In terms of processing, activated by phosphorylation.

It catalyses the reaction alpha-D-glucosamine 1-phosphate = D-glucosamine 6-phosphate. Catalyzes the conversion of glucosamine-6-phosphate to glucosamine-1-phosphate. The protein is Phosphoglucosamine mutase of Rhizobium rhizogenes (strain K84 / ATCC BAA-868) (Agrobacterium radiobacter).